The sequence spans 725 residues: MLAQESILETTVQTETESVTTETSQTVANLESETTSQTVMQEKESSSAIAESSSRNVVAVTTETTNEIQNSGTDGKAVSAESVFSEADYKQATALELATLVREKKVTSEELVKIALAITKRENPTLNAVITLREEAALTEAKALQDTGQPFLGVPLLLKGLGQSLKGESNTNGFGFLRDQVAGGTSTFVKALQNAGFIIIGQTNYPELGWKNISDSKLYGVSVNPWNPNHYSGGSSGGAGASVAAAFVPIASGSDAGGSIRIPASWTGTVGLKPSRGVIIGNSNSAKGQTVHFGLSRTVADTNALFETLLTKKDLPAGHLSQAQPIAYTTESPAGTPVSAEAKEAVAEAVAFLKDQGYTLVEVKHPVDGERLMKNYYTVAAGSAGIADFMARQKLKRPLERNDVELLTWALFQTGKNITSEETTAAWTDIALQAQAMDEFYQQYPILLTPTTAATAPSIDNPLLKPEHAAQMEKIDQLSPAEQKQLIYDQWLTAFTYTPFTQQANLFGHPALSVPTYVSKEGLPLGIQFNSALNEDRTLLQLGALFENNHKINQPHVEEPDKDKEPDASGEPEKDKDPNASGEPDKDKEPDASGEPDKDKEPDASGEPDKDKEPDASGKPDKDKETKTSEGPIEGKDQNQNPDKAGKTTSGSSLDNSLNSSANQGTKSTESTHAFSNKSMIGKQEQLPKKVLPKAGAEVPSTFWIVLGGAFLVTSGTIYIRKTRK.

Residues 1–52 (MLAQESILETTVQTETESVTTETSQTVANLESETTSQTVMQEKESSSAIAES) are disordered. Residues 9 to 27 (ETTVQTETESVTTETSQTV) show a composition bias toward low complexity. Residues 28–40 (ANLESETTSQTVM) show a composition bias toward polar residues. Active-site charge relay system residues include K159 and S235. Residue S259 is the Acyl-ester intermediate of the active site. Residues 551 to 686 (KINQPHVEEP…NKSMIGKQEQ (136 aa)) form a disordered region. Residues 556–637 (HVEEPDKDKE…TSEGPIEGKD (82 aa)) are compositionally biased toward basic and acidic residues. Residues 650–661 (SGSSLDNSLNSS) show a composition bias toward low complexity. Positions 662-679 (ANQGTKSTESTHAFSNKS) are enriched in polar residues. The chain crosses the membrane as a helical span at residues 700–720 (PSTFWIVLGGAFLVTSGTIYI).

It belongs to the amidase family. As to quaternary structure, homodimer in solution.

It localises to the cell membrane. It carries out the reaction N(6)-[(R)-lipoyl]-L-lysyl-[lipoyl-carrier protein] + H2O = L-lysyl-[lipoyl-carrier protein] + (R)-lipoate. Lipoamidase activity is slightly inhibited by p-chloromercuribenzoate. Its function is as follows. Amidohydrolase that releases lipoic acid from the protein-bound form. Cleaves the amide bond that links lipoic acid to the lipoylated lysine epsilon-amino groups, leading to the formation of free lipoic acid plus the unmodified protein. Shows activity toward both high molecular weight protein substrates such as a lipoyl domain and intact 2-oxoacid dehydrogenases as well as small molecule substrates such as lipoyl-lysine. Also acts on small biotinylated substrates. Hydrolyzes the synthetic substrates methyl lipoate and lipoamide. The physiologically important substrates are probably lipoyl-lysine and small peptides containing lipoyl-lysine. Lpa seems likely to enable this bacterium to utilize amide-linked forms of lipoic acid that otherwise could not be assimilated. This chain is Lipoamidase, found in Enterococcus faecalis (Streptococcus faecalis).